The primary structure comprises 70 residues: Dermaseptin-PH (70 aa).

A signal peptide spans 1–22; that stretch reads MDILKKSLFLILFLGVVSLSIC. A propeptide spanning residues 23–44 is cleaved from the precursor; sequence EEEKRENEEEMEQDDEQSEMKR. Gln67 is modified (glutamine amide). The propeptide occupies 68 to 70; the sequence is GGQ.

It belongs to the frog skin active peptide (FSAP) family. In terms of tissue distribution, expressed by the skin glands.

It is found in the secreted. The protein localises to the target cell membrane. Its function is as follows. Antimicrobial peptide which inhibits the growth of Gram-negative (MIC=16-64 uM) and Gram-positive bacteria (MIC=32 uM), and pathogenic yeast Candida albicans (MIC=16 uM). Shows a broad-spectrum of anticancer activities against several cancer cell lines. Also shows slight cytotoxicity on human dermal microvascular endothelium cells (IC(50)=4.85 uM). Induces low hemolysis against horse erythrocytes. The chain is Dermaseptin-PH from Pithecopus hypochondrialis (Orange-legged leaf frog).